The chain runs to 430 residues: 3-oxo-tetronate kinase (430 aa).

ATP contacts are provided by residues serine 268, glycine 366 to threonine 369, and glycine 410.

The protein belongs to the four-carbon acid sugar kinase family.

The enzyme catalyses 3-dehydro-L-erythronate + ATP = 3-dehydro-4-O-phospho-L-erythronate + ADP + H(+). It catalyses the reaction 3-dehydro-D-erythronate + ATP = 3-dehydro-4-O-phospho-D-erythronate + ADP + H(+). In terms of biological role, catalyzes the ATP-dependent phosphorylation of 3-oxo-tetronate to 3-oxo-tetronate 4-phosphate. The protein is 3-oxo-tetronate kinase of Pseudomonas fluorescens (strain ATCC BAA-477 / NRRL B-23932 / Pf-5).